A 464-amino-acid chain; its full sequence is Asparagine--tRNA ligase (464 aa).

This sequence belongs to the class-II aminoacyl-tRNA synthetase family. In terms of assembly, homodimer.

It localises to the cytoplasm. It carries out the reaction tRNA(Asn) + L-asparagine + ATP = L-asparaginyl-tRNA(Asn) + AMP + diphosphate + H(+). This is Asparagine--tRNA ligase from Xanthomonas campestris pv. campestris (strain 8004).